A 264-amino-acid polypeptide reads, in one-letter code: Adenosylcobinamide-GDP ribazoletransferase (264 aa).

The next 7 helical transmembrane spans lie at 10-30 (LFFI…VGYT), 43-63 (LVGA…AQVW), 113-133 (LGSY…VALY), 141-161 (VQAL…PVAL), 183-203 (VSDA…AAAW), 205-225 (LGAS…LAAF), and 243-263 (GAAQ…GVWF).

This sequence belongs to the CobS family. It depends on Mg(2+) as a cofactor.

It is found in the cell inner membrane. It catalyses the reaction alpha-ribazole + adenosylcob(III)inamide-GDP = adenosylcob(III)alamin + GMP + H(+). The enzyme catalyses alpha-ribazole 5'-phosphate + adenosylcob(III)inamide-GDP = adenosylcob(III)alamin 5'-phosphate + GMP + H(+). It functions in the pathway cofactor biosynthesis; adenosylcobalamin biosynthesis; adenosylcobalamin from cob(II)yrinate a,c-diamide: step 7/7. Its function is as follows. Joins adenosylcobinamide-GDP and alpha-ribazole to generate adenosylcobalamin (Ado-cobalamin). Also synthesizes adenosylcobalamin 5'-phosphate from adenosylcobinamide-GDP and alpha-ribazole 5'-phosphate. The polypeptide is Adenosylcobinamide-GDP ribazoletransferase (Leptothrix cholodnii (strain ATCC 51168 / LMG 8142 / SP-6) (Leptothrix discophora (strain SP-6))).